Here is a 472-residue protein sequence, read N- to C-terminus: F420-non-reducing hydrogenase subunit A (472 aa).

4 residues coordinate Ni(2+): Cys61, Cys64, Cys442, and Cys445.

Belongs to the [NiFe]/[NiFeSe] hydrogenase large subunit family. In terms of assembly, the F420-non-reducing hydrogenase is composed of three subunits; MvhA, MvhD and MvhG. It forms a complex with the heterodisulfide reductase (hdr). Requires Ni(2+) as cofactor.

Its function is as follows. Part of a complex that provides reducing equivalents for heterodisulfide reductase. The chain is F420-non-reducing hydrogenase subunit A (mvhA) from Methanothermobacter marburgensis (strain ATCC BAA-927 / DSM 2133 / JCM 14651 / NBRC 100331 / OCM 82 / Marburg) (Methanobacterium thermoautotrophicum).